A 56-amino-acid chain; its full sequence is Ovomucoid (56 aa).

One can recognise a Kazal-like domain in the interval 6–56 (VDCSEYPKPACTLEYVPICGSDNKTYGNKCNFCNAVVESNGTLTLSHFGKC). 3 cysteine pairs are disulfide-bonded: C8–C38, C16–C35, and C24–C56. A glycan (N-linked (GlcNAc...) asparagine) is linked at N45.

It is found in the secreted. This is Ovomucoid from Cyrtonyx montezumae (Montezuma quail).